Consider the following 173-residue polypeptide: Ribosome maturation factor RimM (173 aa).

The region spanning 92-165 is the PRC barrel domain; the sequence is EGEFYHADLI…RVVIEMPGEI (74 aa).

It belongs to the RimM family. Binds ribosomal protein uS19.

The protein resides in the cytoplasm. An accessory protein needed during the final step in the assembly of 30S ribosomal subunit, possibly for assembly of the head region. Essential for efficient processing of 16S rRNA. May be needed both before and after RbfA during the maturation of 16S rRNA. It has affinity for free ribosomal 30S subunits but not for 70S ribosomes. This chain is Ribosome maturation factor RimM, found in Nitrobacter hamburgensis (strain DSM 10229 / NCIMB 13809 / X14).